Here is a 225-residue protein sequence, read N- to C-terminus: Transcription factor HES-7 (225 aa).

The 58-residue stretch at 12 to 69 (GPKMLKPLVEKRRRDRINRSLEELRLLLLERTRDQNLRNPKLEKAEILEFAVGYLRER) folds into the bHLH domain. The Orange domain occupies 92–122 (YLSGFRECLLRLAAFAHDASPAARAQLFSAL). Residues 125–225 (YLRPKPPRPK…PPPAFWRPWP (101 aa)) form a disordered region. Residues 147–158 (LDPAAPALGPAL) show a composition bias toward low complexity. Pro residues predominate over residues 212-225 (APLPPPPAFWRPWP). A WRPW motif motif is present at residues 221 to 224 (WRPW).

Transcription repression requires formation of a complex with a corepressor protein of the Groucho/TLE family.

Its subcellular location is the nucleus. In terms of biological role, transcriptional repressor. Represses transcription from both N box- and E box-containing promoters. May with HES1, cooperatively regulate somite formation in the presomitic mesoderm (PSM). May function as a segmentation clock, which is essential for coordinated somite segmentation. This chain is Transcription factor HES-7 (HES7), found in Homo sapiens (Human).